Reading from the N-terminus, the 209-residue chain is MERMDLSLYVITDEKLLEGKDIYSCIEQAISGGATVIQYRAKNKSSKKMYEEAVVIKKVCRKYDIPFIVNDRIDIAIAVDADGVHLGQDDLDVEVARRILGFEKIIGLSTKKIEDVIKANSLPVDYIGFGSVFPTSTKEDAVYAGLEKLKEVMKISVQPVVAIGGINEKNLTDLLKTGCRNVAVVSAVFKDDNIKENTERLKNIMENFT.

4-amino-2-methyl-5-(diphosphooxymethyl)pyrimidine contacts are provided by residues 38-42 (QYRAK) and Asn-70. The Mg(2+) site is built by Asp-71 and Asp-90. Ser-109 contributes to the 4-amino-2-methyl-5-(diphosphooxymethyl)pyrimidine binding site. Residue 135–137 (TST) coordinates 2-[(2R,5Z)-2-carboxy-4-methylthiazol-5(2H)-ylidene]ethyl phosphate. Residue Lys-138 participates in 4-amino-2-methyl-5-(diphosphooxymethyl)pyrimidine binding. Residues Gly-165 and 185 to 186 (VS) contribute to the 2-[(2R,5Z)-2-carboxy-4-methylthiazol-5(2H)-ylidene]ethyl phosphate site.

It belongs to the thiamine-phosphate synthase family. Mg(2+) serves as cofactor.

It catalyses the reaction 2-[(2R,5Z)-2-carboxy-4-methylthiazol-5(2H)-ylidene]ethyl phosphate + 4-amino-2-methyl-5-(diphosphooxymethyl)pyrimidine + 2 H(+) = thiamine phosphate + CO2 + diphosphate. The enzyme catalyses 2-(2-carboxy-4-methylthiazol-5-yl)ethyl phosphate + 4-amino-2-methyl-5-(diphosphooxymethyl)pyrimidine + 2 H(+) = thiamine phosphate + CO2 + diphosphate. The catalysed reaction is 4-methyl-5-(2-phosphooxyethyl)-thiazole + 4-amino-2-methyl-5-(diphosphooxymethyl)pyrimidine + H(+) = thiamine phosphate + diphosphate. It participates in cofactor biosynthesis; thiamine diphosphate biosynthesis; thiamine phosphate from 4-amino-2-methyl-5-diphosphomethylpyrimidine and 4-methyl-5-(2-phosphoethyl)-thiazole: step 1/1. Condenses 4-methyl-5-(beta-hydroxyethyl)thiazole monophosphate (THZ-P) and 2-methyl-4-amino-5-hydroxymethyl pyrimidine pyrophosphate (HMP-PP) to form thiamine monophosphate (TMP). In Persephonella marina (strain DSM 14350 / EX-H1), this protein is Thiamine-phosphate synthase.